A 279-amino-acid chain; its full sequence is Probable endonuclease 4 (279 aa).

Zn(2+) contacts are provided by His-67, His-107, Glu-144, Asp-177, His-180, His-214, Asp-227, His-229, and Glu-259.

It belongs to the AP endonuclease 2 family. It depends on Zn(2+) as a cofactor.

It catalyses the reaction Endonucleolytic cleavage to 5'-phosphooligonucleotide end-products.. Its function is as follows. Endonuclease IV plays a role in DNA repair. It cleaves phosphodiester bonds at apurinic or apyrimidinic (AP) sites, generating a 3'-hydroxyl group and a 5'-terminal sugar phosphate. The sequence is that of Probable endonuclease 4 from Sulfurihydrogenibium sp. (strain YO3AOP1).